Consider the following 747-residue polypeptide: Pseudouridine-metabolizing bifunctional protein C1861.05 (747 aa).

Residues 1-379 (MLIVMNRGCR…KVSDKGVSSS (379 aa)) are pseudouridine-5'-phosphate glycosidase. Glutamate 61 (proton donor; for PsiMP glycosidase activity) is an active-site residue. 2 residues coordinate substrate: lysine 123 and valine 143. Aspartate 175 contributes to the Mn(2+) binding site. Residue 177 to 179 (SAD) coordinates substrate. Residue lysine 196 is the Nucleophile; for PsiMP glycosidase activity of the active site. The tract at residues 380 to 747 (KKKITETTSK…VNPEIKTLLK (368 aa)) is pseudouridine kinase.

This sequence in the N-terminal section; belongs to the pseudouridine-5'-phosphate glycosidase family. The protein in the C-terminal section; belongs to the carbohydrate kinase PfkB family. Mn(2+) is required as a cofactor.

The protein resides in the cytoplasm. It carries out the reaction D-ribose 5-phosphate + uracil = psi-UMP + H2O. It catalyses the reaction pseudouridine + ATP = psi-UMP + ADP + H(+). Bifunctional enzyme that catalyzes the phosphorylation of pseudouridine to pseudouridine 5'-phosphate (PsiMP), and the reversible cleavage of pseudouridine 5'-phosphate to ribose 5-phosphate and uracil. Is involved in a pseudouridine degradation pathway. The sequence is that of Pseudouridine-metabolizing bifunctional protein C1861.05 from Schizosaccharomyces pombe (strain 972 / ATCC 24843) (Fission yeast).